We begin with the raw amino-acid sequence, 158 residues long: UPF0225 protein PSEEN1229 (158 aa).

The protein belongs to the UPF0225 family.

The protein is UPF0225 protein PSEEN1229 of Pseudomonas entomophila (strain L48).